The sequence spans 185 residues: UPF0301 protein IL2218 (185 aa).

Belongs to the UPF0301 (AlgH) family.

This Idiomarina loihiensis (strain ATCC BAA-735 / DSM 15497 / L2-TR) protein is UPF0301 protein IL2218.